Consider the following 459-residue polypeptide: NADH-ubiquinone oxidoreductase chain 4 (459 aa).

13 helical membrane-spanning segments follow: residues 22–42 (HLSY…LQWL), 61–81 (PIST…ILVS), 94–113 (RTFT…AFSA), 114–134 (LEMM…LIII), 146–166 (AGTY…IALT), 197–217 (WFAL…HLWL), 225–245 (PIAG…YGII), 258–278 (LSYP…LICL), 285–304 (SLIA…AALL), 308–330 (LSIT…LFCL), 352–372 (LLPL…ALPP), 380–400 (LTII…TGLG), and 437–457 (LIMM…QLMT).

It belongs to the complex I subunit 4 family.

It localises to the mitochondrion membrane. It catalyses the reaction a ubiquinone + NADH + 5 H(+)(in) = a ubiquinol + NAD(+) + 4 H(+)(out). In terms of biological role, core subunit of the mitochondrial membrane respiratory chain NADH dehydrogenase (Complex I) that is believed to belong to the minimal assembly required for catalysis. Complex I functions in the transfer of electrons from NADH to the respiratory chain. The immediate electron acceptor for the enzyme is believed to be ubiquinone. The chain is NADH-ubiquinone oxidoreductase chain 4 (MT-ND4) from Pelomedusa subrufa (African side-necked turtle).